The sequence spans 265 residues: Interleukin-1 alpha (265 aa).

A propeptide spanning residues 1–108 (MAKVPDLFED…DTEEVIMKPR (108 aa)) is cleaved from the precursor. At Lys-78 the chain carries N6-acetyllysine. Residues 78–82 (KKRRL) form a nuclear localization signal (NLS) region. Ser-83 carries the post-translational modification Phosphoserine. Residues Asn-98 and Asn-137 are each glycosylated (N-linked (GlcNAc...) asparagine).

It belongs to the IL-1 family. In terms of assembly, monomer. Interacts with TMED10; the interaction mediates the translocation from the cytoplasm into the ERGIC (endoplasmic reticulum-Golgi intermediate compartment) and thereby secretion. Interacts with IL1R1. Interacts with S100A13; this interaction is the first step in the export of IL1A, followed by direct translocation of this complex across the plasma membrane. Post-translationally, acetylated within its nuclear localization sequence, which impacts subcellular localization. Proteolytic processed by CAPN1 in a calcium-dependent manner. Cleavage from 31 kDa precursor to 18 kDa biologically active molecules. In terms of processing, phosphorylated. Phosphorylation greatly enhances susceptibility to digestion and promotes the conversion of pre-IL1A alpha to the biologically active IL1A.

The protein resides in the nucleus. It is found in the cytoplasm. The protein localises to the secreted. Cytokine constitutively present intracellularly in nearly all resting non-hematopoietic cells that plays an important role in inflammation and bridges the innate and adaptive immune systems. After binding to its receptor IL1R1 together with its accessory protein IL1RAP, forms the high affinity interleukin-1 receptor complex. Signaling involves the recruitment of adapter molecules such as MYD88, IRAK1 or IRAK4. In turn, mediates the activation of NF-kappa-B and the three MAPK pathways p38, p42/p44 and JNK pathways. Within the cell, acts as an alarmin and cell death results in its liberation in the extracellular space after disruption of the cell membrane to induce inflammation and alert the host to injury or damage. In addition to its role as a danger signal, which occurs when the cytokine is passively released by cell necrosis, directly senses DNA damage and acts as signal for genotoxic stress without loss of cell integrity. This Canis lupus familiaris (Dog) protein is Interleukin-1 alpha (IL1A).